The sequence spans 146 residues: Hemoglobin subunit beta (146 aa).

In terms of domain architecture, Globin spans 2–146; the sequence is HWTAEEKQLI…VAHALARKYH (145 aa). Heme b contacts are provided by H63 and H92.

The protein belongs to the globin family. As to quaternary structure, heterotetramer of two alpha chains and two beta chains. As to expression, red blood cells.

Functionally, involved in oxygen transport from the lung to the various peripheral tissues. In Anas platyrhynchos platyrhynchos (Northern mallard), this protein is Hemoglobin subunit beta (HBB).